The following is a 231-amino-acid chain: Probable septum site-determining protein MinC (231 aa).

It belongs to the MinC family. Interacts with MinD and FtsZ.

In terms of biological role, cell division inhibitor that blocks the formation of polar Z ring septums. Rapidly oscillates between the poles of the cell to destabilize FtsZ filaments that have formed before they mature into polar Z rings. Prevents FtsZ polymerization. The sequence is that of Probable septum site-determining protein MinC from Bradyrhizobium diazoefficiens (strain JCM 10833 / BCRC 13528 / IAM 13628 / NBRC 14792 / USDA 110).